A 111-amino-acid polypeptide reads, in one-letter code: Cytochrome c3, 26 kDa (111 aa).

Heme c is bound by residues His-30, His-33, Cys-38, Cys-41, His-42, His-43, Cys-54, Cys-59, His-60, His-77, Cys-86, Cys-89, His-90, Cys-105, Cys-108, and His-109.

Homodimer. Heme c serves as cofactor.

Its subcellular location is the periplasm. Functionally, participates in sulfate respiration coupled with phosphorylation by transferring electrons from the enzyme dehydrogenase to ferredoxin. This is Cytochrome c3, 26 kDa from Desulfomicrobium norvegicum (strain DSM 1741 / NCIMB 8310) (Desulfovibrio baculatus (strain Norway 4)).